The chain runs to 556 residues: Formate--tetrahydrofolate ligase 2 (556 aa).

ATP is bound at residue 65 to 72; the sequence is TPAGEGKS.

The protein belongs to the formate--tetrahydrofolate ligase family.

It catalyses the reaction (6S)-5,6,7,8-tetrahydrofolate + formate + ATP = (6R)-10-formyltetrahydrofolate + ADP + phosphate. Its pathway is one-carbon metabolism; tetrahydrofolate interconversion. This chain is Formate--tetrahydrofolate ligase 2, found in Streptococcus sanguinis (strain SK36).